Reading from the N-terminus, the 244-residue chain is Phosphoadenosine 5'-phosphosulfate reductase (244 aa).

C239 functions as the Nucleophile; cysteine thiosulfonate intermediate in the catalytic mechanism.

The protein belongs to the PAPS reductase family. CysH subfamily.

It is found in the cytoplasm. It catalyses the reaction [thioredoxin]-disulfide + sulfite + adenosine 3',5'-bisphosphate + 2 H(+) = [thioredoxin]-dithiol + 3'-phosphoadenylyl sulfate. The protein operates within sulfur metabolism; hydrogen sulfide biosynthesis; sulfite from sulfate: step 3/3. In terms of biological role, catalyzes the formation of sulfite from phosphoadenosine 5'-phosphosulfate (PAPS) using thioredoxin as an electron donor. The sequence is that of Phosphoadenosine 5'-phosphosulfate reductase from Pectobacterium atrosepticum (strain SCRI 1043 / ATCC BAA-672) (Erwinia carotovora subsp. atroseptica).